The primary structure comprises 272 residues: Granaticin polyketide synthase putative ketoacyl reductase 1 (272 aa).

Residue 21 to 45 (LVTGATSGIGLAIARRLAALGARTF) coordinates NAD(+). S155 serves as a coordination point for substrate. The active-site Proton acceptor is the Y168.

The protein belongs to the short-chain dehydrogenases/reductases (SDR) family.

The protein operates within antibiotic biosynthesis; granaticin biosynthesis. The polypeptide is Granaticin polyketide synthase putative ketoacyl reductase 1 (gra-orf5) (Streptomyces violaceoruber).